Reading from the N-terminus, the 346-residue chain is Histidinol-phosphate aminotransferase (346 aa).

N6-(pyridoxal phosphate)lysine is present on Lys209.

This sequence belongs to the class-II pyridoxal-phosphate-dependent aminotransferase family. Histidinol-phosphate aminotransferase subfamily. Homodimer. Pyridoxal 5'-phosphate serves as cofactor.

The catalysed reaction is L-histidinol phosphate + 2-oxoglutarate = 3-(imidazol-4-yl)-2-oxopropyl phosphate + L-glutamate. Its pathway is amino-acid biosynthesis; L-histidine biosynthesis; L-histidine from 5-phospho-alpha-D-ribose 1-diphosphate: step 7/9. This is Histidinol-phosphate aminotransferase from Vibrio vulnificus (strain YJ016).